The sequence spans 331 residues: Centriolar satellite-associated tubulin polyglutamylase complex regulator 1 (331 aa).

Residues 1-111 (MLSPERLALP…HCLLQLLCPD (111 aa)) form a required for interaction with PCM1 region. Residues 1-225 (MLSPERLALP…SCPPPALVKE (225 aa)) form a required for interaction with TPGS1, LRRC49, and TTLL1 region. A required for interaction with TPGS2 region spans residues 112 to 331 (FPLELTQKAA…STEETDESET (220 aa)). The disordered stretch occupies residues 288–331 (SPEASCLPSRTPPRVGSPWRPLHHSRKVDGESDGSTEETDESET). Acidic residues predominate over residues 318 to 331 (ESDGSTEETDESET). Phosphoserine is present on serine 319.

It belongs to the CSTPP1 family. Interacts with PCM1. Interacts with TTLL1, TPGS1, TPGS2 and LRRC49; the interactions link CSTPP1 to the complex TPGC. Binds to alpha-tubulin.

The protein localises to the cytoplasm. It is found in the cytoskeleton. Its subcellular location is the microtubule organizing center. It localises to the centrosome. The protein resides in the centriolar satellite. Its function is as follows. Regulator of the tubulin polyglutamylase complex (TPGC) that controls cytoskeletal organization, nuclear shape, and cilium disassembly by balancing microtubule and actin assembly. Regulates the assembly and stability of the TPGC and thereby modulates polyglutamylation of the microtubule, which antagonizes MAP4 binding. The chain is Centriolar satellite-associated tubulin polyglutamylase complex regulator 1 from Homo sapiens (Human).